The sequence spans 252 residues: Imidazole glycerol phosphate synthase subunit HisF (252 aa).

Catalysis depends on residues Asp11 and Asp130.

The protein belongs to the HisA/HisF family. In terms of assembly, heterodimer of HisH and HisF.

The protein resides in the cytoplasm. It catalyses the reaction 5-[(5-phospho-1-deoxy-D-ribulos-1-ylimino)methylamino]-1-(5-phospho-beta-D-ribosyl)imidazole-4-carboxamide + L-glutamine = D-erythro-1-(imidazol-4-yl)glycerol 3-phosphate + 5-amino-1-(5-phospho-beta-D-ribosyl)imidazole-4-carboxamide + L-glutamate + H(+). The protein operates within amino-acid biosynthesis; L-histidine biosynthesis; L-histidine from 5-phospho-alpha-D-ribose 1-diphosphate: step 5/9. In terms of biological role, IGPS catalyzes the conversion of PRFAR and glutamine to IGP, AICAR and glutamate. The HisF subunit catalyzes the cyclization activity that produces IGP and AICAR from PRFAR using the ammonia provided by the HisH subunit. This is Imidazole glycerol phosphate synthase subunit HisF from Bacillus licheniformis (strain ATCC 14580 / DSM 13 / JCM 2505 / CCUG 7422 / NBRC 12200 / NCIMB 9375 / NCTC 10341 / NRRL NRS-1264 / Gibson 46).